A 183-amino-acid chain; its full sequence is Large ribosomal subunit protein uL5 (183 aa).

Belongs to the universal ribosomal protein uL5 family. As to quaternary structure, part of the 50S ribosomal subunit; part of the 5S rRNA/L5/L18/L25 subcomplex. Contacts the 5S rRNA and the P site tRNA. Forms a bridge to the 30S subunit in the 70S ribosome.

Its function is as follows. This is one of the proteins that bind and probably mediate the attachment of the 5S RNA into the large ribosomal subunit, where it forms part of the central protuberance. In the 70S ribosome it contacts protein S13 of the 30S subunit (bridge B1b), connecting the 2 subunits; this bridge is implicated in subunit movement. Contacts the P site tRNA; the 5S rRNA and some of its associated proteins might help stabilize positioning of ribosome-bound tRNAs. This Chlorobaculum tepidum (strain ATCC 49652 / DSM 12025 / NBRC 103806 / TLS) (Chlorobium tepidum) protein is Large ribosomal subunit protein uL5.